A 475-amino-acid polypeptide reads, in one-letter code: Glutamate--tRNA ligase (475 aa).

The 'HIGH' region signature appears at 8–18 (PSPTGTLHIGT). The 'KMSKS' region motif lies at 247–251 (KLSKR). Residue K250 coordinates ATP.

The protein belongs to the class-I aminoacyl-tRNA synthetase family. Glutamate--tRNA ligase type 1 subfamily. Monomer.

The protein resides in the cytoplasm. It catalyses the reaction tRNA(Glu) + L-glutamate + ATP = L-glutamyl-tRNA(Glu) + AMP + diphosphate. Its function is as follows. Catalyzes the attachment of glutamate to tRNA(Glu) in a two-step reaction: glutamate is first activated by ATP to form Glu-AMP and then transferred to the acceptor end of tRNA(Glu). In Synechococcus sp. (strain RCC307), this protein is Glutamate--tRNA ligase.